Here is a 113-residue protein sequence, read N- to C-terminus: Probable 4-amino-4-deoxy-L-arabinose-phosphoundecaprenol flippase subunit ArnE (113 aa).

A run of 3 helical transmembrane segments spans residues 37-57 (SALKWLIGAVILLAVGMLFWL), 62-82 (ILPLGIAYPMLSINFIMVTLA), and 91-111 (AGIKHWSGVVFIMLGILLMSL). The 67-residue stretch at 45 to 111 (AVILLAVGML…IMLGILLMSL (67 aa)) folds into the EamA domain.

This sequence belongs to the ArnE family. Heterodimer of ArnE and ArnF.

It is found in the cell inner membrane. The protein operates within bacterial outer membrane biogenesis; lipopolysaccharide biosynthesis. Translocates 4-amino-4-deoxy-L-arabinose-phosphoundecaprenol (alpha-L-Ara4N-phosphoundecaprenol) from the cytoplasmic to the periplasmic side of the inner membrane. This Photorhabdus laumondii subsp. laumondii (strain DSM 15139 / CIP 105565 / TT01) (Photorhabdus luminescens subsp. laumondii) protein is Probable 4-amino-4-deoxy-L-arabinose-phosphoundecaprenol flippase subunit ArnE.